Here is a 37-residue protein sequence, read N- to C-terminus: Large ribosomal subunit protein bL36 (37 aa).

Belongs to the bacterial ribosomal protein bL36 family.

This is Large ribosomal subunit protein bL36 (rpmJ) from Mycobacterium tuberculosis (strain ATCC 25618 / H37Rv).